The sequence spans 348 residues: MFGPAKGRHFGVHPAPGFPGGVSQQAAGTKAGPAGAWPVGSRTDTMWRLRCKAKDGTHVLQGLSSRTRVRELQGQIAAITGIAPGGQRILVGYPPECLDLSNGDTILEDLPIQSGDMLIIEEDQTRPRSSPAFTKRGASSYVRETLPVLTRTVVPADNSCLFTSVYYVVEGGVLNPACAPEMRRLIAQIVASDPDFYSEAILGKTNQEYCDWIKRDDTWGGAIEISILSKFYQCEICVVDTQTVRIDRFGEDAGYTKRVLLIYDGIHYDPLQRNFPDPDTPPLTIFSSNDDIVLVQALELADEARRRRQFTDVNRFTLRCMVCQKGLTGQAEAREHAKETGHTNFGEV.

Residues 1–11 (MFGPAKGRHFG) are compositionally biased toward basic residues. The disordered stretch occupies residues 1–39 (MFGPAKGRHFGVHPAPGFPGGVSQQAAGTKAGPAGAWPV). The segment at 50–128 (RCKAKDGTHV…IIEEDQTRPR (79 aa)) is UBX-like. The OTU domain occupies 149–274 (LTRTVVPADN…GIHYDPLQRN (126 aa)). Residues 154-160 (VPADNSC) are cys-loop. The active site involves Asp157. Cys160 (nucleophile) is an active-site residue. Residues 213 to 223 (IKRDDTWGGAI) are variable-loop. A his-loop region spans residues 263–267 (YDGIH). Ile266 is a substrate binding site. Residue His267 is part of the active site. Residues 291–296 (DIVLVQ) form an S2 site region. The C2H2-type zinc finger occupies 318-342 (LRCMVCQKGLTGQAEAREHAKETGH). Residue His342 is part of the active site.

In terms of assembly, interacts with VCP; the interaction is direct. Interacts with FAF2/UBXD8. Interacts with DERL1; however interaction is dependent on the UBAX-like region, suggesting that it may be indirect. Interacts with PLAA, UBXN6 and VCP; may form a complex involved in macroautophagy.

It is found in the cytoplasm. It catalyses the reaction Thiol-dependent hydrolysis of ester, thioester, amide, peptide and isopeptide bonds formed by the C-terminal Gly of ubiquitin (a 76-residue protein attached to proteins as an intracellular targeting signal).. Hydrolase that can remove conjugated ubiquitin from proteins and participates in endoplasmic reticulum-associated degradation (ERAD) for misfolded lumenal proteins. May act by triming the ubiquitin chain on the associated substrate to facilitate their threading through the VCP/p97 pore. Ubiquitin moieties on substrates may present a steric impediment to the threading process when the substrate is transferred to the VCP pore and threaded through VCP's axial channel. Mediates deubiquitination of 'Lys-27'-, 'Lys-29'- and 'Lys-33'-linked polyubiquitin chains. Also able to hydrolyze 'Lys-11'-linked ubiquitin chains. Cleaves both polyubiquitin and di-ubiquitin. May play a role in macroautophagy, regulating for instance the clearance of damaged lysosomes. May recruit PLAA, UBXN6 and VCP to damaged lysosome membranes decorated with K48-linked ubiquitin chains and remove these chains allowing autophagosome formation. The sequence is that of Ubiquitin thioesterase OTU1 (YOD1) from Homo sapiens (Human).